Reading from the N-terminus, the 306-residue chain is Recombination-associated protein RdgC (306 aa).

The protein belongs to the RdgC family.

Its subcellular location is the cytoplasm. It is found in the nucleoid. In terms of biological role, may be involved in recombination. This is Recombination-associated protein RdgC from Pseudomonas putida (strain GB-1).